Here is a 181-residue protein sequence, read N- to C-terminus: Heavy metal-associated isoprenylated plant protein 46 (181 aa).

The region spanning 2–71 is the HMA domain; the sequence is KQKILIRVTM…KVAFAELVSV (70 aa). Residues 74 to 121 are disordered; the sequence is VEPPKKEDEKKGGDGKGAEGKGGDQKGGDKKGPDDKEPPEPKPVPCYP. Basic and acidic residues predominate over residues 75–113; that stretch reads EPPKKEDEKKGGDGKGAEGKGGDQKGGDKKGPDDKEPPE. Cysteine methyl ester is present on cysteine 178. Cysteine 178 is lipidated: S-farnesyl cysteine. Positions 179 to 181 are cleaved as a propeptide — removed in mature form; sequence KIM.

The protein belongs to the HIPP family.

Functionally, probable heavy-metal-binding protein. The polypeptide is Heavy metal-associated isoprenylated plant protein 46 (Arabidopsis thaliana (Mouse-ear cress)).